A 300-amino-acid polypeptide reads, in one-letter code: tRNA-cytidine(32) 2-sulfurtransferase (300 aa).

The PP-loop motif motif lies at 41–46 (SGGKDS). Residues Cys-116, Cys-119, and Cys-207 each coordinate [4Fe-4S] cluster.

The protein belongs to the TtcA family. As to quaternary structure, homodimer. It depends on Mg(2+) as a cofactor. [4Fe-4S] cluster serves as cofactor.

The protein resides in the cytoplasm. The enzyme catalyses cytidine(32) in tRNA + S-sulfanyl-L-cysteinyl-[cysteine desulfurase] + AH2 + ATP = 2-thiocytidine(32) in tRNA + L-cysteinyl-[cysteine desulfurase] + A + AMP + diphosphate + H(+). It participates in tRNA modification. Catalyzes the ATP-dependent 2-thiolation of cytidine in position 32 of tRNA, to form 2-thiocytidine (s(2)C32). The sulfur atoms are provided by the cysteine/cysteine desulfurase (IscS) system. The chain is tRNA-cytidine(32) 2-sulfurtransferase from Idiomarina loihiensis (strain ATCC BAA-735 / DSM 15497 / L2-TR).